We begin with the raw amino-acid sequence, 426 residues long: Elongation factor 1-alpha (426 aa).

The tr-type G domain maps to 5–221 (KPHMNLAVIG…DTFKEPDKPT (217 aa)). The tract at residues 14 to 21 (GHIDHGKS) is G1. 14-21 (GHIDHGKS) contributes to the GTP binding site. Residue serine 21 participates in Mg(2+) binding. The segment at 70-74 (GITID) is G2. The interval 91–94 (DCPG) is G3. Residues 91–95 (DCPGH) and 146–149 (NKMD) contribute to the GTP site. The interval 146–149 (NKMD) is G4. A G5 region spans residues 185–187 (SSF).

The protein belongs to the TRAFAC class translation factor GTPase superfamily. Classic translation factor GTPase family. EF-Tu/EF-1A subfamily.

The protein resides in the cytoplasm. The catalysed reaction is GTP + H2O = GDP + phosphate + H(+). In terms of biological role, GTP hydrolase that promotes the GTP-dependent binding of aminoacyl-tRNA to the A-site of ribosomes during protein biosynthesis. This chain is Elongation factor 1-alpha, found in Methanosphaerula palustris (strain ATCC BAA-1556 / DSM 19958 / E1-9c).